We begin with the raw amino-acid sequence, 215 residues long: 23.2 kDa heat shock protein (215 aa).

The N-terminal stretch at 1–27 (MASMRTAAAAAMLACIAVVLASTAADG) is a signal peptide. One can recognise a sHSP domain in the interval 69 to 189 (DVAMLSMARV…GPRVVGIASA (121 aa)). Residues 183-215 (VVGIASAGGDDGGKKSIGGAGEGQNQQAKKVEL) are disordered. The segment covering 205 to 215 (GQNQQAKKVEL) has biased composition (polar residues).

Belongs to the small heat shock protein (HSP20) family. May form oligomeric structures.

The protein resides in the endoplasmic reticulum. This chain is 23.2 kDa heat shock protein (HSP23.2), found in Oryza sativa subsp. japonica (Rice).